The primary structure comprises 215 residues: Adenylate kinase (215 aa).

An ATP-binding site is contributed by 10-15; that stretch reads GAGKGT. The tract at residues 30–59 is NMP; it reads STGDILRENVKNQTELGKKAKEYMDKGLLV. Residues T31, R36, 57-59, 85-88, and Q92 contribute to the AMP site; these read LLV and GFPR. Residues 126–163 are LID; the sequence is GRRICKSCGASFHVVYRPPKKEGICDICGGQLYQREDD. Position 127 (R127) interacts with ATP. Residues C130 and C133 each coordinate Zn(2+). Position 136-137 (136-137) interacts with ATP; the sequence is SF. The Zn(2+) site is built by C150 and C153. Positions 160 and 171 each coordinate AMP. Residue E199 coordinates ATP.

The protein belongs to the adenylate kinase family. In terms of assembly, monomer.

Its subcellular location is the cytoplasm. It catalyses the reaction AMP + ATP = 2 ADP. Its pathway is purine metabolism; AMP biosynthesis via salvage pathway; AMP from ADP: step 1/1. Its function is as follows. Catalyzes the reversible transfer of the terminal phosphate group between ATP and AMP. Plays an important role in cellular energy homeostasis and in adenine nucleotide metabolism. The polypeptide is Adenylate kinase (Caldicellulosiruptor saccharolyticus (strain ATCC 43494 / DSM 8903 / Tp8T 6331)).